Reading from the N-terminus, the 598-residue chain is MSQTGAPPRWRNCPRRGQPVAGKFLPMKTMLGPRYDDKVPEENRFHPSMLSNYLKSLKVKMGLLVDLTNTTRFYDRADIEKEGIKYVKLSCKGHGECPTAETTEMFIRLCEHFIEKTPTELIGVHCTHGFNRTGFLICAYLVEKMDWSIEAAVAAFAQARPPGIYKGDYLKELFRRYGDVEDAPAAPPLPEWCFDEDEEEDGEEDGSASAPASEPSSSHTGQSKKKKERLKLGAVFLEGVSVKGVSQVTTQPKLGEIQRKCQQFSEWDRSGFPGAQPVSMDRKNIRMLEQNGYKVSWKADGTRYMMLIDGRNEVYMIDRDNSVFHIENLEFPFRKDLRIHLSNTLLDGEMIIDKVNGQPVPRYLIYDIIKFSGQPVGQCDFNRRLLCIEKEIISPRFEKMKLGQIDKAKEPFSVRNKPFFDIHAARKLLEGSFTSQVSHEVDGLIFQPIGKYKPGRCDDILKWKPPSHNSVDFRLKITKVGGEGLIPQTVGLLYVGNYDMPFAQMKITKDLKQYDNKIIECTFVNNTWVFMRQRVDKSFPNAYDTAMAVCNSIQHPVTKEILLEFLERCAQVQSRKNPADSDLMPPPPPKRSANSIPQ.

Residues 1 to 215 (MSQTGAPPRW…GSASAPASEP (215 aa)) are TPase. Residues 25–183 (LPMKTMLGPR…FRRYGDVEDA (159 aa)) form the Tyrosine-protein phosphatase domain. The active-site Phosphocysteine intermediate is the Cys-126. Residues 186–227 (APPLPEWCFDEDEEEDGEEDGSASAPASEPSSSHTGQSKKKK) are disordered. Acidic residues predominate over residues 193–206 (CFDEDEEEDGEEDG). Residues 207-218 (SASAPASEPSSS) show a composition bias toward low complexity. Residues 233–598 (GAVFLEGVSV…PKRSANSIPQ (366 aa)) form a GTase region. Lys-298 serves as the catalytic N6-GMP-lysine intermediate. Residues Arg-303, Arg-319, 347–349 (DGE), 462–464 (KWK), and 532–537 (RQRVDK) each bind GTP. The segment at 575–598 (RKNPADSDLMPPPPPKRSANSIPQ) is disordered.

In the N-terminal section; belongs to the non-receptor class of the protein-tyrosine phosphatase family. This sequence in the C-terminal section; belongs to the eukaryotic GTase family.

Its subcellular location is the nucleus. The enzyme catalyses a 5'-end triphospho-ribonucleoside in mRNA + H2O = a 5'-end diphospho-ribonucleoside in mRNA + phosphate + H(+). It catalyses the reaction a 5'-end diphospho-ribonucleoside in mRNA + GTP + H(+) = a 5'-end (5'-triphosphoguanosine)-ribonucleoside in mRNA + diphosphate. Its function is as follows. Bifunctional mRNA-capping enzyme exhibiting RNA 5'-triphosphate monophosphatase activity in the N-terminal part and mRNA guanylyltransferase activity in the C-terminal part. Catalyzes the first two steps of cap formation: by removing the gamma-phosphate from the 5'-triphosphate end of nascent mRNA to yield a diphosphate end, and by transferring the GMP moiety of GTP to the 5'-diphosphate terminus of RNA via a covalent enzyme-GMP reaction intermediate. This chain is mRNA-capping enzyme (rngtt), found in Danio rerio (Zebrafish).